Consider the following 229-residue polypeptide: Movement and silencing protein TGBp1 (229 aa).

Residues 1–114 (MVEFTKRLLL…PAAQVPHFVK (114 aa)) form the (+)RNA virus helicase ATP-binding domain. Residues 115–229 (LFSHRCGLNS…MSFDAADTSA (115 aa)) form the (+)RNA virus helicase C-terminal domain.

It belongs to the Tymovirales TGBp1 protein family. Homodimer and homooligomer. Interacts with capsid protein. Interacts with host AGO1; this interaction targets the host protein for degradation, thereby suppressing the antiviral RNA silencing.

Its subcellular location is the host cytoplasm. Its function is as follows. Transports viral genome to neighboring plant cells directly through plasmosdesmata, without any budding. The movement protein allows efficient cell to cell propagation, by bypassing the host cell wall barrier. Increases plasmodesma size exclusion limit. Acts as a suppressor of RNA-mediated gene silencing, also known as post-transcriptional gene silencing (PTGS), a mechanism of plant viral defense that limits the accumulation of viral RNAs. This is Movement and silencing protein TGBp1 from Strawberry mild yellow edge-associated virus (SMYEaV).